Reading from the N-terminus, the 291-residue chain is 33 kDa chaperonin (291 aa).

Cystine bridges form between cysteine 235–cysteine 237 and cysteine 268–cysteine 271.

It belongs to the HSP33 family. Post-translationally, under oxidizing conditions two disulfide bonds are formed involving the reactive cysteines. Under reducing conditions zinc is bound to the reactive cysteines and the protein is inactive.

Its subcellular location is the cytoplasm. Redox regulated molecular chaperone. Protects both thermally unfolding and oxidatively damaged proteins from irreversible aggregation. Plays an important role in the bacterial defense system toward oxidative stress. The protein is 33 kDa chaperonin of Bacillus subtilis (strain 168).